Consider the following 599-residue polypeptide: MTTQVPPSALLPLNPEQLARLQAATTDLTPTQLAWVSGYFWGVLNQQPAALAATPAPAAEMPGITIISASQTGNARRVAEALRDDLLAAKLNVKLVNAGDYKFKQIASEKLLIVVTSTQGEGEPPEEAVALHKFLFSKKAPKLENTAFAVFSLGDSSYEFFCQSGKDFDSKLAELGGERLLDRVDADVEYQAAASEWRARVVDALKSRAPVAAPSQSVATGTVNEIHTSPYSKDAPLAASLSVNQKITGRNSEKDVRHIEIDLGDSGLRYQPGDALGVWYQNDPALVKELVELLWLKGDEPVTVEGKTLPLNEALQWHFELTVNTANIVENYATLTRSETLLPLVGDKAKLQHYAATTPIVDMVRFSPAQLDAEALINLLRPLTPRLYSIASSQAEVENEVHVTVGVVRYDVEGRARAGGASSFLADRVEEEGEVRVFIEHNDNFRLPTNPETPVIMIGPGTGIAPFRAFMQQRAADEAPGKNWLFFGNPHFTEDFLYQVEWQRYVKEGVLTRIDLAWSRDQKEKIYVQDKLREQGAELWRWINDGAHIYVCGDANRMAKDVEQALLEVIAEFGGMDTEAADEFLSELRVERRYQRDVY.

Residues 64 to 202 (ITIISASQTG…AASEWRARVV (139 aa)) enclose the Flavodoxin-like domain. FMN contacts are provided by residues 70 to 75 (SQTGNA), 117 to 120 (STQG), and 153 to 162 (LGDSSYEFFC). In terms of domain architecture, FAD-binding FR-type spans 234-448 (DAPLAASLSV…IEHNDNFRLP (215 aa)). Residues Thr-322, Ala-356, 386 to 389 (RLYS), 404 to 406 (TVG), Tyr-410, and 419 to 422 (GGAS) contribute to the FAD site. NADP(+) contacts are provided by residues 519 to 520 (SR), 525 to 529 (KIYVQ), and Asp-561. Tyr-599 contributes to the FAD binding site.

This sequence belongs to the NADPH-dependent sulphite reductase flavoprotein subunit CysJ family. In the N-terminal section; belongs to the flavodoxin family. It in the C-terminal section; belongs to the flavoprotein pyridine nucleotide cytochrome reductase family. As to quaternary structure, alpha(8)-beta(8). The alpha component is a flavoprotein, the beta component is a hemoprotein. The cofactor is FAD. Requires FMN as cofactor.

It carries out the reaction hydrogen sulfide + 3 NADP(+) + 3 H2O = sulfite + 3 NADPH + 4 H(+). It participates in sulfur metabolism; hydrogen sulfide biosynthesis; hydrogen sulfide from sulfite (NADPH route): step 1/1. Its function is as follows. Component of the sulfite reductase complex that catalyzes the 6-electron reduction of sulfite to sulfide. This is one of several activities required for the biosynthesis of L-cysteine from sulfate. The flavoprotein component catalyzes the electron flow from NADPH -&gt; FAD -&gt; FMN to the hemoprotein component. This is Sulfite reductase [NADPH] flavoprotein alpha-component from Escherichia coli O6:K15:H31 (strain 536 / UPEC).